A 227-amino-acid chain; its full sequence is MFS-type transporter FVEG_08288 (227 aa).

A helical transmembrane segment spans residues 8–28 (VFLTVLIAIASCSVYILNIAI). N-linked (GlcNAc...) asparagine glycosylation occurs at N40. The next 5 helical transmembrane spans lie at 43 to 63 (TVGL…MAGG), 100 to 120 (VANT…YYGV), 122 to 142 (FMVP…HFTL), 164 to 181 (FVRN…APWM), and 188 to 208 (YMMT…IWLI).

It belongs to the major facilitator superfamily.

It is found in the membrane. MFS-type transporter; part of the Fusarium detoxification of benzoxazolinone cluster 1 (FDB1) involved in the degradation of benzoxazolinones produced by the host plant. Maize, wheat, and rye produce the 2 benzoxazinone phytoanticipins 2,4-dihy-droxy-7-methoxy-1,4-benzoxazin-3-one (DIMBOA) and 2,4-dihydroxy-1,4-benzoxazin-3-one (DIBOA) that, due to their inherent instability once released, spontaneously degrade to the more stable corresponding benzoxazolinones, 6-methoxy-2-benzoxazolinone (MBOA) and 2-benzoxazolinone (BOA), respectively. In Gibberella moniliformis (strain M3125 / FGSC 7600) (Maize ear and stalk rot fungus), this protein is MFS-type transporter FVEG_08288.